A 551-amino-acid polypeptide reads, in one-letter code: Serine/threonine-protein kinase ppk21 (551 aa).

The disordered stretch occupies residues 24–43 (EARGERNPVKPQSSNVVPGT). A Protein kinase domain is found at 55–315 (YVFGDIIGDG…TQQIKQFPFF (261 aa)). Residues 65 to 67 (SFS) and Lys-84 contribute to the ATP site. The PIF-pocket stretch occupies residues 86-131 (LDKKYIVKENKVKYVNIERDSMMRLNGFPGISRLFHTFQDDLKLYY). Residues 134-136 (ELA) and Glu-140 contribute to the ATP site. Asp-179 (proton acceptor) is an active-site residue. The ATP site is built by Glu-183 and Asp-197. At Ser-220 the chain carries Phosphoserine; by autocatalysis. The residue at position 538 (Ser-538) is a Phosphoserine.

The protein belongs to the protein kinase superfamily. AGC Ser/Thr protein kinase family. PDPK1 subfamily.

The protein resides in the cytoplasm. It is found in the nucleus. It localises to the cytoskeleton. Its subcellular location is the microtubule organizing center. The protein localises to the spindle pole body. It catalyses the reaction L-seryl-[protein] + ATP = O-phospho-L-seryl-[protein] + ADP + H(+). The enzyme catalyses L-threonyl-[protein] + ATP = O-phospho-L-threonyl-[protein] + ADP + H(+). In Schizosaccharomyces pombe (strain 972 / ATCC 24843) (Fission yeast), this protein is Serine/threonine-protein kinase ppk21 (ppk21).